Reading from the N-terminus, the 202-residue chain is Rho GDP-dissociation inhibitor (202 aa).

An N-acetylalanine modification is found at A2. T27 bears the Phosphothreonine mark. S40 carries the post-translational modification Phosphoserine.

Belongs to the Rho GDI family.

It localises to the cytoplasm. Its function is as follows. Regulates the GDP/GTP exchange reaction of the Rho proteins by inhibiting the dissociation of GDP from them, and the subsequent binding of GTP to them. The polypeptide is Rho GDP-dissociation inhibitor (RDI1) (Saccharomyces cerevisiae (strain ATCC 204508 / S288c) (Baker's yeast)).